The following is a 284-amino-acid chain: Tryptophan 2,3-dioxygenase (284 aa).

Substrate is bound by residues 53 to 57 (FIIQH) and arginine 119. Residue histidine 242 coordinates heme. Position 256 (threonine 256) interacts with substrate.

The protein belongs to the tryptophan 2,3-dioxygenase family. In terms of assembly, homotetramer. It depends on heme as a cofactor.

It catalyses the reaction L-tryptophan + O2 = N-formyl-L-kynurenine. Its pathway is amino-acid degradation; L-tryptophan degradation via kynurenine pathway; L-kynurenine from L-tryptophan: step 1/2. It participates in siderophore biosynthesis; quinolobactin biosynthesis. Functionally, heme-dependent dioxygenase that catalyzes the oxidative cleavage of the L-tryptophan (L-Trp) pyrrole ring and converts L-tryptophan to N-formyl-L-kynurenine. Catalyzes the oxidative cleavage of the indole moiety. Required for synthesis of the siderophore quinolobactin. The protein is Tryptophan 2,3-dioxygenase of Pseudomonas fluorescens.